The following is a 229-amino-acid chain: Translin (229 aa).

The segment at Arg-86 to His-90 is DNA/RNA binding. The segment at Leu-177 to Leu-198 is leucine-zipper.

It belongs to the translin family. Ring-shaped heterooctamer of six TSN and two TSNAX subunits, DNA/RNA binding occurs inside the ring.

It is found in the cytoplasm. The protein localises to the nucleus. Its function is as follows. Exhibits both single-stranded and double-stranded endoribonuclease activity. May act as an activator of RNA-induced silencing complex (RISC) by facilitating endonucleolytic cleavage of the siRNA passenger strand. In terms of biological role, DNA-binding protein that specifically recognizes consensus sequences at the breakpoint junctions in chromosomal translocations, mostly involving immunoglobulin (Ig)/T-cell receptor gene segments. Seems to recognize single-stranded DNA ends generated by staggered breaks occurring at recombination hot spots. The polypeptide is Translin (TSN) (Gallus gallus (Chicken)).